A 151-amino-acid polypeptide reads, in one-letter code: Ribosome maturation factor RimP (151 aa).

It belongs to the RimP family.

The protein resides in the cytoplasm. Its function is as follows. Required for maturation of 30S ribosomal subunits. In Shewanella halifaxensis (strain HAW-EB4), this protein is Ribosome maturation factor RimP.